The chain runs to 592 residues: Inactive metallocarboxypeptidase ECM14 (592 aa).

Residues 1 to 21 (MRQFTHGTLLAILALANTISA) form the signal peptide. Positions 22-174 (IPSFSANNYP…QTVYESYPSS (153 aa)) are excised as a propeptide. Over residues 170-179 (SYPSSSQRPT) the composition is skewed to polar residues. A disordered region spans residues 170 to 191 (SYPSSSQRPTDNGRGFLPSRES). A Peptidase M14 domain is found at 202–521 (DYQPLSVIGP…NAVMVLGKFL (320 aa)). Residues His264 and Glu267 each contribute to the Zn(2+) site. Residues 264–267 (HARE), Arg322, and 339–340 (DR) contribute to the substrate site. A disulfide bond links Cys333 and Cys356. Asn349 carries an N-linked (GlcNAc...) asparagine glycan. His396 contributes to the Zn(2+) binding site. 397-398 (SY) serves as a coordination point for substrate. The segment at 542 to 592 (ADKPILDDGDDDEEEDGQDKNDDSWIPDEYKNDNDHDDDDDGWGLRRRRKR) is disordered. Residues 548–558 (DDGDDDEEEDG) show a composition bias toward acidic residues. Basic and acidic residues predominate over residues 559-575 (QDKNDDSWIPDEYKNDN).

This sequence belongs to the peptidase M14 family. It depends on Zn(2+) as a cofactor.

It is found in the vacuole. It localises to the secreted. In terms of biological role, inactive carboxypeptidase that may play a role in cell wall organization and biogenesis. The protein is Inactive metallocarboxypeptidase ECM14 (ECM14) of Blastomyces gilchristii (strain SLH14081) (Blastomyces dermatitidis).